We begin with the raw amino-acid sequence, 331 residues long: Putative sigma L-dependent transcriptional regulator YplP (331 aa).

Positions 12-213 (HLIGEHQTFL…LKNAADYMAA (202 aa)) constitute a Sigma-54 factor interaction domain. Residue 95-104 (AVRGTLFLDD) participates in ATP binding.

In terms of biological role, may play a role in cold adaptation. The chain is Putative sigma L-dependent transcriptional regulator YplP (yplP) from Bacillus subtilis (strain 168).